Here is a 234-residue protein sequence, read N- to C-terminus: Venom allergen 3 (234 aa).

The N-terminal stretch at 1-22 (MELIVSILWLAITAENLANTLA) is a signal peptide. 4 disulfide bridges follow: Cys-26–Cys-41, Cys-31–Cys-125, Cys-52–Cys-118, and Cys-198–Cys-216. The SCP domain occupies 69 to 218 (VNKHNELRQR…WTKHYLVCNY (150 aa)). The tract at residues 80–99 (ASGKEMRGTNGPQPPAVKMP) is disordered.

It belongs to the CRISP family. Expressed by the venom gland.

The protein localises to the secreted. The sequence is that of Venom allergen 3 from Solenopsis invicta (Red imported fire ant).